The sequence spans 242 residues: 4-hydroxy-tetrahydrodipicolinate reductase (242 aa).

NAD(+)-binding positions include 8 to 13 (GAKGRM), 75 to 77 (GTT), and 99 to 102 (ATNM). Histidine 131 acts as the Proton donor/acceptor in catalysis. Histidine 132 contributes to the (S)-2,3,4,5-tetrahydrodipicolinate binding site. The active-site Proton donor is lysine 135. 141 to 142 (GT) contacts (S)-2,3,4,5-tetrahydrodipicolinate.

It belongs to the DapB family.

It localises to the cytoplasm. It catalyses the reaction (S)-2,3,4,5-tetrahydrodipicolinate + NAD(+) + H2O = (2S,4S)-4-hydroxy-2,3,4,5-tetrahydrodipicolinate + NADH + H(+). The enzyme catalyses (S)-2,3,4,5-tetrahydrodipicolinate + NADP(+) + H2O = (2S,4S)-4-hydroxy-2,3,4,5-tetrahydrodipicolinate + NADPH + H(+). It participates in amino-acid biosynthesis; L-lysine biosynthesis via DAP pathway; (S)-tetrahydrodipicolinate from L-aspartate: step 4/4. Catalyzes the conversion of 4-hydroxy-tetrahydrodipicolinate (HTPA) to tetrahydrodipicolinate. The chain is 4-hydroxy-tetrahydrodipicolinate reductase from Campylobacter jejuni subsp. jejuni serotype O:6 (strain 81116 / NCTC 11828).